Consider the following 90-residue polypeptide: Large ribosomal subunit protein eL37 (90 aa).

The A20-type zinc finger occupies 13 to 46; the sequence is NKSHTLCNRCGRRSFHVQKKTCSSCGYPAAKMRS. Zn(2+) is bound by residues Cys19, Cys22, Cys34, and Cys37.

This sequence belongs to the eukaryotic ribosomal protein eL37 family. In terms of assembly, component of the large ribosomal subunit. Mature ribosomes consist of a small (40S) and a large (60S) subunit. The 40S subunit contains about 32 different proteins and 1 molecule of RNA (18S). The 60S subunit contains 45 different proteins and 3 molecules of RNA (25S, 5.8S and 5S). Zn(2+) serves as cofactor.

Its subcellular location is the cytoplasm. Its function is as follows. Component of the ribosome, a large ribonucleoprotein complex responsible for the synthesis of proteins in the cell. The small ribosomal subunit (SSU) binds messenger RNAs (mRNAs) and translates the encoded message by selecting cognate aminoacyl-transfer RNA (tRNA) molecules. The large subunit (LSU) contains the ribosomal catalytic site termed the peptidyl transferase center (PTC), which catalyzes the formation of peptide bonds, thereby polymerizing the amino acids delivered by tRNAs into a polypeptide chain. The nascent polypeptides leave the ribosome through a tunnel in the LSU and interact with protein factors that function in enzymatic processing, targeting, and the membrane insertion of nascent chains at the exit of the ribosomal tunnel. This Candida albicans (strain SC5314 / ATCC MYA-2876) (Yeast) protein is Large ribosomal subunit protein eL37.